We begin with the raw amino-acid sequence, 296 residues long: Protoheme IX farnesyltransferase 2 (296 aa).

Transmembrane regions (helical) follow at residues 7-27 (LLVAKPGIIFGNLIAVAGGYF), 36-56 (PMLLLATVIGLSLVVASGCVL), 83-103 (LKAALAHGLVLGVAGFGLLWW), 108-128 (LTTALAGFGYFVYVGLYSLWF), 134-154 (YGTLVGSLSGAMPPVVGYCAV), 163-183 (ASLLAIFCLWQMPHSYAIAIF), 207-227 (IHIVLYILAFMAATLALCLGG), 229-249 (AGYGYLLVAVAVSLWWLAIAL), and 265-285 (FAFSIVAITALSVMMSIDFQV).

This sequence belongs to the UbiA prenyltransferase family. Protoheme IX farnesyltransferase subfamily.

It localises to the cell inner membrane. It catalyses the reaction heme b + (2E,6E)-farnesyl diphosphate + H2O = Fe(II)-heme o + diphosphate. It functions in the pathway porphyrin-containing compound metabolism; heme O biosynthesis; heme O from protoheme: step 1/1. Converts heme B (protoheme IX) to heme O by substitution of the vinyl group on carbon 2 of heme B porphyrin ring with a hydroxyethyl farnesyl side group. The sequence is that of Protoheme IX farnesyltransferase 2 from Pseudomonas aeruginosa (strain UCBPP-PA14).